The following is a 336-amino-acid chain: Uroporphyrinogen decarboxylase (336 aa).

Residues arginine 24–arginine 28, aspartate 73, tyrosine 142, serine 197, and histidine 312 contribute to the substrate site.

Belongs to the uroporphyrinogen decarboxylase family. In terms of assembly, homodimer.

The protein localises to the cytoplasm. The enzyme catalyses uroporphyrinogen III + 4 H(+) = coproporphyrinogen III + 4 CO2. The protein operates within porphyrin-containing compound metabolism; protoporphyrin-IX biosynthesis; coproporphyrinogen-III from 5-aminolevulinate: step 4/4. Its function is as follows. Catalyzes the decarboxylation of four acetate groups of uroporphyrinogen-III to yield coproporphyrinogen-III. This Chlamydia trachomatis serovar L2 (strain ATCC VR-902B / DSM 19102 / 434/Bu) protein is Uroporphyrinogen decarboxylase.